A 603-amino-acid polypeptide reads, in one-letter code: MDAQTFKTAIVRRRLVDVLMNPELKATLVLKNGLVINVVTREIYPADVAVYDEYILKVGDASDLIGPETEVVDLQGKYYVSPGFIDSHMHFESSMLTISEFSRLSIPSGTTTLVADPHEIGNALGPVGIKAMAEETKVVPNRVYLVVPALTPDCPGLETAGYDITSRDMPEILNYPNVIGIGELQGFSNAKYVYKYTPEIITDLIASTTYAKSIGKIVDGNAPELFGSELAAHLIAAGTEASCHETTTKEECVEKLRYGMYVFMREGSTQKNMAECIRAVTEEGLDSRRLIGATDDMVAEDLAKNGHMNWVVARIIKQGIDPVEAIQMVTINPATYFGLKHVGVLAPGKMADIVVISDLMDMKVEKVYIGGKLVAEKGKMVVNIPKYTYPEEVKHSVKCKPVTAEALEIKATGSNAVVRTIGLIPDQNLTESFEFTVPVSGGVAQPDLTQDVLPIAVVERYGRNGSIGRAFVRGFGLKGGAFAESVSHDAHNIIVVGTSYQDMALAVNRVIEMGGGVAVVKNGRVLGDLRLPVGGLITDELDGYELSRKIAELHRLTAVELGCTVHAPFMHLSFLALTTSPKWKITDQGLIDVNSFAIIPPVK.

It belongs to the metallo-dependent hydrolases superfamily. Adenine deaminase family. The cofactor is Mn(2+).

It catalyses the reaction adenine + H2O + H(+) = hypoxanthine + NH4(+). The sequence is that of Adenine deaminase 1 from Carboxydothermus hydrogenoformans (strain ATCC BAA-161 / DSM 6008 / Z-2901).